We begin with the raw amino-acid sequence, 394 residues long: Elongation factor Tu (394 aa).

One can recognise a tr-type G domain in the interval 10–205 (KPHVNIGTIG…VDTWIPLPPR (196 aa)). Positions 19 to 26 (GHVDHGKT) are G1. 19–26 (GHVDHGKT) provides a ligand contact to GTP. T26 provides a ligand contact to Mg(2+). Positions 60-64 (GITIN) are G2. The G3 stretch occupies residues 81–84 (DCPG). Residues 81–85 (DCPGH) and 136–139 (NKCD) contribute to the GTP site. The segment at 136–139 (NKCD) is G4. The interval 174-176 (SAL) is G5.

The protein belongs to the TRAFAC class translation factor GTPase superfamily. Classic translation factor GTPase family. EF-Tu/EF-1A subfamily. As to quaternary structure, monomer.

Its subcellular location is the cytoplasm. The catalysed reaction is GTP + H2O = GDP + phosphate + H(+). Functionally, GTP hydrolase that promotes the GTP-dependent binding of aminoacyl-tRNA to the A-site of ribosomes during protein biosynthesis. This is Elongation factor Tu from Phocaeicola vulgatus (strain ATCC 8482 / DSM 1447 / JCM 5826 / CCUG 4940 / NBRC 14291 / NCTC 11154) (Bacteroides vulgatus).